Consider the following 478-residue polypeptide: Glutamate--tRNA ligase (478 aa).

The short motif at 23-33 is the 'HIGH' region element; the sequence is PSPTGFIHLGN. A compositionally biased stretch (basic and acidic residues) spans 130-145; it reads KQKPRYDGTWRPEEGK. The tract at residues 130–153 is disordered; the sequence is KQKPRYDGTWRPEEGKTLPPVPEG. The 'KMSKS' region signature appears at 255-259; it reads KMSKR. Lys258 contributes to the ATP binding site.

This sequence belongs to the class-I aminoacyl-tRNA synthetase family. Glutamate--tRNA ligase type 1 subfamily. In terms of assembly, monomer.

Its subcellular location is the cytoplasm. It catalyses the reaction tRNA(Glu) + L-glutamate + ATP = L-glutamyl-tRNA(Glu) + AMP + diphosphate. Catalyzes the attachment of glutamate to tRNA(Glu) in a two-step reaction: glutamate is first activated by ATP to form Glu-AMP and then transferred to the acceptor end of tRNA(Glu). The protein is Glutamate--tRNA ligase of Paracidovorax citrulli (strain AAC00-1) (Acidovorax citrulli).